A 162-amino-acid chain; its full sequence is Regulator of ribonuclease activity A (162 aa).

It belongs to the RraA family. In terms of assembly, homotrimer. Binds to both RNA-binding sites in the C-terminal region of Rne and to RhlB.

The protein resides in the cytoplasm. In terms of biological role, globally modulates RNA abundance by binding to RNase E (Rne) and regulating its endonucleolytic activity. Can modulate Rne action in a substrate-dependent manner by altering the composition of the degradosome. Modulates RNA-binding and helicase activities of the degradosome. The polypeptide is Regulator of ribonuclease activity A (Haemophilus influenzae (strain ATCC 51907 / DSM 11121 / KW20 / Rd)).